The chain runs to 208 residues: Probable GTP-binding protein EngB (208 aa).

The EngB-type G domain maps to 22 to 195; the sequence is GLPEIALAGR…WHSIEEIFIA (174 aa). Residues 30–37, 57–61, 75–78, 142–145, and 174–176 each bind GTP; these read GRSNVGKS, GKTRT, DLPG, TKSD, and ISS. S37 and T59 together coordinate Mg(2+).

The protein belongs to the TRAFAC class TrmE-Era-EngA-EngB-Septin-like GTPase superfamily. EngB GTPase family. It depends on Mg(2+) as a cofactor.

Its function is as follows. Necessary for normal cell division and for the maintenance of normal septation. This is Probable GTP-binding protein EngB from Alkaliphilus oremlandii (strain OhILAs) (Clostridium oremlandii (strain OhILAs)).